A 343-amino-acid polypeptide reads, in one-letter code: Arginine-hydroxylase NDUFAF5, mitochondrial (343 aa).

Residues 1–29 constitute a mitochondrion transit peptide; the sequence is MLRRVVLSRLYARLGGPAVSAGRGGRRGV. A disordered region spans residues 18–40; the sequence is AVSAGRGGRRGVASSVPPSGSTS.

It belongs to the methyltransferase superfamily. Interacts with NDUFAF8, leading to stabilize NDUFAF5. Interacts with NDUFS7. Interacts with PYURF (via TRM112 domain); the interaction is direct and stabilizes NDUFAF5 protein.

Its subcellular location is the mitochondrion inner membrane. Arginine hydroxylase that mediates hydroxylation of 'Arg-111' of NDUFS7 and is involved in the assembly of mitochondrial NADH:ubiquinone oxidoreductase complex (complex I, MT-ND1) at early stages. May also have methyltransferase activity. In Rattus norvegicus (Rat), this protein is Arginine-hydroxylase NDUFAF5, mitochondrial.